The following is a 250-amino-acid chain: uncharacterized protein (250 aa).

Positions 1–17 (MRTLVLLSSVAILSTLA) are cleaved as a signal peptide. N-linked (GlcNAc...) asparagine glycosylation is found at Asn48, Asn159, Asn223, and Asn239.

It is found in the secreted. This is an uncharacterized protein from Caenorhabditis elegans.